Reading from the N-terminus, the 740-residue chain is Ethylene receptor 1 (740 aa).

The next 3 helical transmembrane spans lie at 23–43, 53–73, and 92–112; these read ISDF…IYFV, WVLV…LINL, and VLTA…IPDL. Cu cation contacts are provided by cysteine 65 and histidine 69. Positions 158 to 307 constitute a GAF domain; the sequence is DRHTILKTTL…VVADQVAVAL (150 aa). A Histidine kinase domain is found at 350–588; sequence VMNHEMRTPM…TFIVKLGIAE (239 aa). Histidine 353 carries the post-translational modification Phosphohistidine; by autocatalysis. The region spanning 614–731 is the Response regulatory domain; that stretch reads KVLVMDDNGV…KMRSVLSELI (118 aa). 4-aspartylphosphate is present on aspartate 662.

The protein belongs to the ethylene receptor family. Homodimer; disulfide-linked. Cu cation serves as cofactor. Activation probably requires a transfer of a phosphate group between a His in the transmitter domain and an Asp of the receiver domain.

It localises to the endoplasmic reticulum membrane. It catalyses the reaction ATP + protein L-histidine = ADP + protein N-phospho-L-histidine.. Functionally, may act early in the ethylene signal transduction pathway, possibly as an ethylene receptor, or as a regulator of the pathway. The chain is Ethylene receptor 1 (ETR1) from Cucumis sativus (Cucumber).